The sequence spans 384 residues: Sphingosine kinase 1 (384 aa).

In terms of domain architecture, DAGKc spans 12–159 (PRPCRVLVLL…MNLLSLHTAS (148 aa)). ATP-binding positions include 22–24 (NPR) and 54–58 (TERRN). 79–82 (SGDG) provides a ligand contact to substrate. The active-site Proton donor/acceptor is the aspartate 81. ATP-binding positions include glutamate 86 and 111-113 (GSG). Short sequence motifs (nuclear export signal) lie at residues 147-155 (LSPMNLLSL) and 161-169 (LRLFSVLSL). Aspartate 178 provides a ligand contact to substrate. 2 residues coordinate ATP: arginine 185 and arginine 191. At threonine 193 the chain carries Phosphothreonine. Position 225 is a phosphoserine (serine 225). Residue 341–343 (DGE) coordinates ATP.

As to quaternary structure, interacts with ACY1. Binds to calmodulin. Interacts with SPHKAP. Interacts with CIB1, the interaction occurs in a calcium-dependent manner. Interacts with TRAF2. Interacts with EEF1A1; the interaction enhances SPHK1 kinase activity. The cofactor is Mg(2+). As to expression, widely expressed with highest levels in adult liver, kidney, heart and skeletal muscle. Expressed in brain cortex (at protein level).

It localises to the cytoplasm. It is found in the nucleus. The protein resides in the cell membrane. Its subcellular location is the endosome membrane. The protein localises to the membrane. It localises to the clathrin-coated pit. It is found in the synapse. The catalysed reaction is a sphingoid base + ATP = a sphingoid 1-phosphate + ADP + H(+). It catalyses the reaction L-seryl-[protein] + acetyl-CoA = O-acetyl-L-seryl-[protein] + CoA. The enzyme catalyses sphinganine + ATP = sphinganine 1-phosphate + ADP + H(+). It carries out the reaction sphing-4-enine + ATP = sphing-4-enine 1-phosphate + ADP + H(+). The catalysed reaction is 1-O-hexadecyl-2-amino-sn-glycerol + ATP = 1-O-hexadecyl-2-desoxy-2-amino-sn-glycero-3-phosphate + ADP + H(+). With respect to regulation, acetyltransferase activity increases in presence of the kinase substrate, sphingosine. In Purkinje cells, kinase activity on sphingosine increases in presence of VEGFA. In neurons, kinase activity increases during the first 24h in presence of Amyloid-beta protein 42 to decrease after 96h. In terms of biological role, catalyzes the phosphorylation of sphingosine to form sphingosine 1-phosphate (SPP), a lipid mediator with both intra- and extracellular functions. Also acts on D-erythro-sphingosine and to a lesser extent sphinganine, but not other lipids, such as D,L-threo-dihydrosphingosine, N,N-dimethylsphingosine, diacylglycerol, ceramide, or phosphatidylinositol. In contrast to proapoptotic SPHK2, has a negative effect on intracellular ceramide levels, enhances cell growth and inhibits apoptosis. Involved in the regulation of inflammatory response and neuroinflammation. Via the product sphingosine 1-phosphate, stimulates TRAF2 E3 ubiquitin ligase activity, and promotes activation of NF-kappa-B in response to TNF signaling leading to IL17 secretion. In response to TNF and in parallel to NF-kappa-B activation, negatively regulates RANTES induction through p38 MAPK signaling pathway. Involved in endocytic membrane trafficking induced by sphingosine, recruited to dilate endosomes, also plays a role on later stages of endosomal maturation and membrane fusion independently of its kinase activity. In Purkinje cells, seems to be also involved in the regulation of autophagosome-lysosome fusion upon VEGFA. Functionally, has serine acetyltransferase activity on PTGS2/COX2 in an acetyl-CoA dependent manner. The acetyltransferase activity increases in presence of the kinase substrate, sphingosine. During neuroinflammation, through PTGS2 acetylation, promotes neuronal secretion of specialized preresolving mediators (SPMs), especially 15-R-lipoxin A4, which results in an increase of phagocytic microglia. The chain is Sphingosine kinase 1 from Homo sapiens (Human).